The sequence spans 243 residues: Carboxy-S-adenosyl-L-methionine synthase (243 aa).

Residues Y40, 65–67 (GSS), 90–91 (DN), 118–119 (DI), N133, and R200 each bind S-adenosyl-L-methionine.

It belongs to the class I-like SAM-binding methyltransferase superfamily. Cx-SAM synthase family. Homodimer.

It catalyses the reaction prephenate + S-adenosyl-L-methionine = carboxy-S-adenosyl-L-methionine + 3-phenylpyruvate + H2O. Functionally, catalyzes the conversion of S-adenosyl-L-methionine (SAM) to carboxy-S-adenosyl-L-methionine (Cx-SAM). The sequence is that of Carboxy-S-adenosyl-L-methionine synthase from Shewanella frigidimarina (strain NCIMB 400).